We begin with the raw amino-acid sequence, 313 residues long: FAM172 family protein homolog Y75B8A.31 (313 aa).

Residues 293–313 form a disordered region; it reads VKSENSKESDDEAPKSKKICV. Residues 296 to 307 show a composition bias toward basic and acidic residues; that stretch reads ENSKESDDEAPK.

Belongs to the FAM172 family.

This is FAM172 family protein homolog Y75B8A.31 from Caenorhabditis elegans.